The following is a 352-amino-acid chain: Ribosomal RNA large subunit methyltransferase M (352 aa).

S-adenosyl-L-methionine-binding positions include serine 184, 217–220 (APGG), aspartate 236, aspartate 256, and aspartate 272. Lysine 301 acts as the Proton acceptor in catalysis.

Belongs to the class I-like SAM-binding methyltransferase superfamily. RNA methyltransferase RlmE family. RlmM subfamily. Monomer.

The protein localises to the cytoplasm. It catalyses the reaction cytidine(2498) in 23S rRNA + S-adenosyl-L-methionine = 2'-O-methylcytidine(2498) in 23S rRNA + S-adenosyl-L-homocysteine + H(+). Functionally, catalyzes the 2'-O-methylation at nucleotide C2498 in 23S rRNA. This chain is Ribosomal RNA large subunit methyltransferase M, found in Pseudomonas aeruginosa (strain LESB58).